We begin with the raw amino-acid sequence, 798 residues long: Protocadherin beta-13 (798 aa).

A signal peptide spans 1-28 (MEASGKLICRQRQVLFSFLLLGLSLAGA). Residues 29–690 (AEPRSYSVVE…AQADSLTVYL (662 aa)) lie on the Extracellular side of the membrane. 5 consecutive Cadherin domains span residues 36-134 (VVEE…SPVF), 139-243 (MLVK…APEF), 248-348 (YRVQ…APEV), 353-451 (FTSP…APAF), and 456-561 (YTLF…SPFV). 2 N-linked (GlcNAc...) asparagine glycosylation sites follow: N418 and N436. A glycan (N-linked (GlcNAc...) asparagine) is linked at N567. The region spanning 568 to 671 (GSAPCTELVP…LVDGFSQPYL (104 aa)) is the Cadherin 6 domain. Residues 691–711 (VVALASVSSLFLFSVLLFVAV) form a helical membrane-spanning segment. The Cytoplasmic portion of the chain corresponds to 712 to 798 (RLCRRSRAAS…FPNNFGFNIQ (87 aa)).

Its subcellular location is the cell membrane. Functionally, potential calcium-dependent cell-adhesion protein. May be involved in the establishment and maintenance of specific neuronal connections in the brain. This chain is Protocadherin beta-13 (PCDHB13), found in Pan troglodytes (Chimpanzee).